A 90-amino-acid polypeptide reads, in one-letter code: RNA-binding protein Hfq (90 aa).

In terms of domain architecture, Sm spans 9-68 (DPFLNALRRERVPVSIYLVNGIKLQGQVESFDQFVILLKNTVSQMVYKHAISTVVPARPF).

It belongs to the Hfq family. In terms of assembly, homohexamer.

In terms of biological role, RNA chaperone that binds small regulatory RNA (sRNAs) and mRNAs to facilitate mRNA translational regulation in response to envelope stress, environmental stress and changes in metabolite concentrations. Also binds with high specificity to tRNAs. The polypeptide is RNA-binding protein Hfq (Shewanella baltica (strain OS155 / ATCC BAA-1091)).